A 100-amino-acid chain; its full sequence is UPF0125 protein CV_3462 (100 aa).

The protein belongs to the UPF0125 (RnfH) family.

The chain is UPF0125 protein CV_3462 from Chromobacterium violaceum (strain ATCC 12472 / DSM 30191 / JCM 1249 / CCUG 213 / NBRC 12614 / NCIMB 9131 / NCTC 9757 / MK).